The following is a 162-amino-acid chain: NADPH-dependent 7-cyano-7-deazaguanine reductase (162 aa).

C53 functions as the Thioimide intermediate in the catalytic mechanism. The active-site Proton donor is D60. Substrate is bound by residues 75-77 (VES) and 94-95 (HE).

The protein belongs to the GTP cyclohydrolase I family. QueF type 1 subfamily.

It localises to the cytoplasm. It carries out the reaction 7-aminomethyl-7-carbaguanine + 2 NADP(+) = 7-cyano-7-deazaguanine + 2 NADPH + 3 H(+). The protein operates within tRNA modification; tRNA-queuosine biosynthesis. Its function is as follows. Catalyzes the NADPH-dependent reduction of 7-cyano-7-deazaguanine (preQ0) to 7-aminomethyl-7-deazaguanine (preQ1). In Exiguobacterium sibiricum (strain DSM 17290 / CCUG 55495 / CIP 109462 / JCM 13490 / 255-15), this protein is NADPH-dependent 7-cyano-7-deazaguanine reductase.